The sequence spans 408 residues: MFVQEEKIFAGKVLRLQVCTMEGAEWLEEVPEDTTVEKLKERCLKHCVPGSLEDPKTVTHHKLIHATSEKVLTDSKTVLEENIQDRDVLLLIKKRAPPPLPKMADVSAEEKRKQEQKAPDKDAILKATANLPSRNVDRTVAQHNMRDFQTELRKILVSLIEVAQKLLALNPDAVELFKKANAMLDEDEEDRVDEIALRQLTEMGFPESRAVKALRLNHMSVTQAMEWLIEHADDPAVDAPLPGQTPSEAAAEAGASSAEATAGPSSEAGGEEAKDELTEIFKKIRRKREFRPDPRAVIALMEMGFDEKEVVDALRVNNNQQNAACEWLLGDRKPSPEDLDKGIDTNSPLFQAILENPVVQLGLTNPKTLLAFEDMLENPLNSTQWMNDPETGPVMLQISRIFQTLNRT.

The Ubiquitin-like domain maps to 14–98; the sequence is LRLQVCTMEG…LLLIKKRAPP (85 aa). The tract at residues 100–119 is disordered; that stretch reads LPKMADVSAEEKRKQEQKAP. The span at 108–119 shows a compositional bias: basic and acidic residues; that stretch reads AEEKRKQEQKAP. In terms of domain architecture, UBA 1 spans 185–231; sequence DEDEEDRVDEIALRQLTEMGFPESRAVKALRLNHMSVTQAMEWLIEH. The segment at 235–275 is disordered; that stretch reads PAVDAPLPGQTPSEAAAEAGASSAEATAGPSSEAGGEEAKD. Over residues 245–268 the composition is skewed to low complexity; the sequence is TPSEAAAEAGASSAEATAGPSSEA. The UBA 2 domain occupies 291 to 331; sequence RPDPRAVIALMEMGFDEKEVVDALRVNNNQQNAACEWLLGD. One can recognise an STI1 domain in the interval 356–395; sequence NPVVQLGLTNPKTLLAFEDMLENPLNSTQWMNDPETGPVM.

As to quaternary structure, component of the KPC complex.

It is found in the cytoplasm. Its pathway is protein modification; protein ubiquitination. In terms of biological role, non-catalytic component of the KPC complex, a E3 ubiquitin-protein ligase complex that mediates polyubiquitination of target proteins, such as CDKN1B and NFKB1. Within the KPC complex, UBAC1 acts as an adapter that promotes the transfer of target proteins that have been polyubiquitinated by RNF123/KPC1 to the 26S proteasome. The protein is Ubiquitin-associated domain-containing protein 1 (UBAC1) of Gallus gallus (Chicken).